Consider the following 131-residue polypeptide: Putative pre-16S rRNA nuclease (131 aa).

Belongs to the YqgF nuclease family.

Its subcellular location is the cytoplasm. In terms of biological role, could be a nuclease involved in processing of the 5'-end of pre-16S rRNA. The protein is Putative pre-16S rRNA nuclease of Bordetella avium (strain 197N).